The primary structure comprises 490 residues: Colicin-10 (490 aa).

Over residues M1–S20 the composition is skewed to polar residues. Disordered regions lie at residues M1–G29 and Q146–R171. The segment covering Q146–A170 has biased composition (basic and acidic residues). Residues I447 to I467 traverse the membrane as a helical segment.

It belongs to the channel forming colicin family.

It localises to the host membrane. Functionally, this colicin is a channel-forming colicin. This class of transmembrane toxins depolarize the cytoplasmic membrane, leading to dissipation of cellular energy. Its function is as follows. Colicins are polypeptide toxins produced by and active against E.coli and closely related bacteria. This is Colicin-10 (cta) from Escherichia coli.